We begin with the raw amino-acid sequence, 154 residues long: MINEIQIAAFNAAYAKTVDSDAMEQWPTFFTKDCHYRVTNVDNHAEGLAAGIVWADSQDMLTDRISALREANIYERHRYRHILGLPSIQSGDATQASASTPFMVLRIMHTGETEVFASGEYLDKFTTIDGKLRLQERIAVCDSTVTDTLMALPL.

The protein belongs to the bacterial ring-hydroxylating dioxygenase beta subunit family. As to quaternary structure, heterotetramer composed of 2 alpha (TphA2I and TphA2II) and 2 beta (TphA3I and TphA3II) subunits. Part of a multicomponent enzyme system composed of a reductase (TphA1I or TphA1II) and a two-subunit oxygenase component (TphA2I or TphA2II and TphA3I or TphA3II). The cofactor is Fe cation.

The enzyme catalyses terephthalate + NADH + O2 + H(+) = (3S,4R)-3,4-dihydroxycyclohexa-1,5-diene-1,4-dicarboxylate + NAD(+). Inhibited by EDTA. In terms of biological role, component of the terephthalate 1,2-dioxygenase multicomponent enzyme system which catalyzes the dioxygenation of terephthalate (TER/TPA) to 1,2-dihydroxy-3,5-cyclohexadiene-1,4-dicarboxylic acid (DCD). It can also use 2,5-dicarboxypyridine (PDC) and 1,4-napthalenedicarboxylic acid (NDC) as substrates, and preferentially uses NADPH which is the physiological electron donor. The sequence is that of Terephthalate 1,2-dioxygenase, terminal oxygenase component subunit beta 1 (tphA3I) from Comamonas sp.